The following is a 466-amino-acid chain: Methylenetetrahydrofolate--tRNA-(uracil-5-)-methyltransferase TrmFO (466 aa).

Residue 10–15 (GGGLAG) coordinates FAD.

This sequence belongs to the MnmG family. TrmFO subfamily. FAD is required as a cofactor.

It localises to the cytoplasm. The enzyme catalyses uridine(54) in tRNA + (6R)-5,10-methylene-5,6,7,8-tetrahydrofolate + NADH + H(+) = 5-methyluridine(54) in tRNA + (6S)-5,6,7,8-tetrahydrofolate + NAD(+). The catalysed reaction is uridine(54) in tRNA + (6R)-5,10-methylene-5,6,7,8-tetrahydrofolate + NADPH + H(+) = 5-methyluridine(54) in tRNA + (6S)-5,6,7,8-tetrahydrofolate + NADP(+). Functionally, catalyzes the folate-dependent formation of 5-methyl-uridine at position 54 (M-5-U54) in all tRNAs. The polypeptide is Methylenetetrahydrofolate--tRNA-(uracil-5-)-methyltransferase TrmFO (Phenylobacterium zucineum (strain HLK1)).